Here is a 492-residue protein sequence, read N- to C-terminus: MDPYKYRSSSAYNAPFWTTNSGAPVYNNNNSLTVGSRGPILLEDYHLVEKLANFDRERIPERVVHARGASAKGFFEVTHDITALTCADFLRAPGVQTPVIVRFSTVIHERGSPETLRDPRGFAVKFYTREGNFDLVGNNFPVFFIRDGMKFPDMVHSLKPNPKSHIQEDWRIMDFFSHHPESLHMFTFLLDDIGVPQDYRHMDGSGVNTYTLINKAGKAYYVKFHWKPTCGVKSLLEEEAIKIGGANHSHATQDLYDSIAAGNYPEWKLFIQTIDPDHEDRLDFDPLDVTKTWPEDIFPLQPVGRLVLNKNIDNFFAENEQLAFCPAIIVPGIYYSDDKLLQTRIFSYSDTQRHRLGPNYLQLPANAPKCAHHNNHYDGFMNFMHRDEEIDYFPSRYDPARHAEQYPIPPVRLSGKRDKCVIEKENNFKQPGERYRSFSPDRQERFINRVVGGLSDPRVTHEVRSIWVSYWSQADKSLGQKIASRLNVKPNY.

Active-site residues include histidine 65 and asparagine 138. Tyrosine 348 is a heme binding site.

It belongs to the catalase family. Homotetramer. Heme is required as a cofactor.

The protein localises to the cytoplasm. It is found in the cytosol. Its subcellular location is the peroxisome matrix. The catalysed reaction is 2 H2O2 = O2 + 2 H2O. Catalyzes the degradation of hydrogen peroxide (H(2)O(2)) generated by peroxisomal oxidases to water and oxygen, thereby protecting cells from the toxic effects of hydrogen peroxide. The sequence is that of Catalase from Helianthus annuus (Common sunflower).